A 400-amino-acid chain; its full sequence is Tryptophan synthase beta chain (400 aa).

The residue at position 92 (lysine 92) is an N6-(pyridoxal phosphate)lysine.

It belongs to the TrpB family. As to quaternary structure, tetramer of two alpha and two beta chains. Pyridoxal 5'-phosphate is required as a cofactor.

The enzyme catalyses (1S,2R)-1-C-(indol-3-yl)glycerol 3-phosphate + L-serine = D-glyceraldehyde 3-phosphate + L-tryptophan + H2O. It participates in amino-acid biosynthesis; L-tryptophan biosynthesis; L-tryptophan from chorismate: step 5/5. Its function is as follows. The beta subunit is responsible for the synthesis of L-tryptophan from indole and L-serine. The polypeptide is Tryptophan synthase beta chain (Neisseria gonorrhoeae (strain NCCP11945)).